Consider the following 150-residue polypeptide: UPF0336 protein SGR_2883 (150 aa).

Residues Arg-10–Ala-116 enclose the MaoC-like domain.

This sequence belongs to the UPF0336 family.

This chain is UPF0336 protein SGR_2883, found in Streptomyces griseus subsp. griseus (strain JCM 4626 / CBS 651.72 / NBRC 13350 / KCC S-0626 / ISP 5235).